The chain runs to 399 residues: Forkhead box protein I3 (399 aa).

Disordered regions lie at residues 87 to 109, 221 to 287, and 307 to 353; these read AGAQRGFAQPSASAPASPAGSAA, KRRR…ASTL, and SSSS…STVG. The span at 96 to 109 shows a compositional bias: low complexity; the sequence is PSASAPASPAGSAA. Phosphoserine is present on residues Ser99 and Ser103. Residues 129–223 constitute a DNA-binding region (fork-head); the sequence is RPPYSYSALI…DNGNFRRKRR (95 aa). The Nuclear localization signal signature appears at 219–225; that stretch reads RRKRRRR. Composition is skewed to polar residues over residues 228–248 and 258–267; these read ASSNLTVPSGTSKSEGQSSRL and SPSSILRPSQ. 3 positions are modified to phosphoserine: Ser258, Ser266, and Ser268. Composition is skewed to polar residues over residues 275–287, 307–317, and 328–353; these read TKSTASSPGASTL, SSSSMGNQRTL, and QLPSSTFPNTSVPDSSPDSMQLSTVG. The 9aaTAD signature appears at 385–393; sequence SMVNSLIYP.

Post-translationally, phosphorylation promotes the transcription factor activity. Dephosphorylation by protein phosphatase 2A (PP2A) reduces its activity. As to expression, specifically expressed in the epithelium in developing ectodermal appendages. Expressed in pharyngeal endoderm and ectoderm. Expressed in pre-placodal ectoderm. Down-regulated as the otic placode is induced. Expressed in teeth and hair follicles throughout embryogenesis. Expressed in mammary glands only during the earliest stages of development.

The protein localises to the nucleus. Transcription factor required for pharyngeal arch development, which is involved in hair, ear, jaw and dental development. May act as a pioneer transcription factor during pharyngeal arch development. Required for epithelial cell differentiation within the epidermis. Acts at multiple stages of otic placode induction: necessary for preplacodal ectoderm to execute an inner ear program. Required for hair follicle stem cell specification. Acts downstream of TBX1 for the formation of the thymus and parathyroid glands from the third pharyngeal pouch. This Mus musculus (Mouse) protein is Forkhead box protein I3.